Consider the following 357-residue polypeptide: Tribbles homolog 3 (357 aa).

The disordered stretch occupies residues 1–63; the sequence is MRASPLAVPA…PAPVHAPDVT (63 aa). The interaction with DDIT3/CHOP stretch occupies residues 1-127; it reads MRASPLAVPA…GHVARPAEVL (127 aa). The region spanning 68–316 is the Protein kinase domain; that stretch reads LGPYVLLEPE…SGILLHPWLR (249 aa). Positions 333–357 are disordered; it reads DQVVPEGPGLEEAEEEGERDMGLYG. Over residues 341-350 the composition is skewed to acidic residues; it reads GLEEAEEEGE.

This sequence belongs to the protein kinase superfamily. CAMK Ser/Thr protein kinase family. Tribbles subfamily. As to quaternary structure, interacts with AKT1, AKT2, MAP2K1 and MAP2K7. Interacts with ATF4. Interacts with DDIT3/CHOP and inhibits its interaction with EP300/P300. Interacts with APOBEC3C. Interacts (via N-terminus) with APOBEC3A. Interacts with RELA.

The protein localises to the nucleus. Its function is as follows. Inactive protein kinase which acts as a regulator of the integrated stress response (ISR), a process for adaptation to various stress. Inhibits the transcriptional activity of DDIT3/CHOP and is involved in DDIT3/CHOP-dependent cell death during ER stress. May play a role in programmed neuronal cell death but does not appear to affect non-neuronal cells. Acts as a negative feedback regulator of the ATF4-dependent transcription during the ISR: while TRIB3 expression is promoted by ATF4, TRIB3 protein interacts with ATF4 and inhibits ATF4 transcription activity. Disrupts insulin signaling by binding directly to Akt kinases and blocking their activation. May bind directly to and mask the 'Thr-308' phosphorylation site in AKT1. Interacts with the NF-kappa-B transactivator p65 RELA and inhibits its phosphorylation and thus its transcriptional activation activity. Interacts with MAPK kinases and regulates activation of MAP kinases. Can inhibit APOBEC3A editing of nuclear DNA. The chain is Tribbles homolog 3 (TRIB3) from Bos taurus (Bovine).